The following is a 183-amino-acid chain: Peptidyl-tRNA hydrolase (183 aa).

Residue tyrosine 14 participates in tRNA binding. Residue histidine 19 is the Proton acceptor of the active site. Tyrosine 64, asparagine 66, and asparagine 112 together coordinate tRNA.

This sequence belongs to the PTH family. Monomer.

The protein localises to the cytoplasm. It carries out the reaction an N-acyl-L-alpha-aminoacyl-tRNA + H2O = an N-acyl-L-amino acid + a tRNA + H(+). In terms of biological role, hydrolyzes ribosome-free peptidyl-tRNAs (with 1 or more amino acids incorporated), which drop off the ribosome during protein synthesis, or as a result of ribosome stalling. Its function is as follows. Catalyzes the release of premature peptidyl moieties from peptidyl-tRNA molecules trapped in stalled 50S ribosomal subunits, and thus maintains levels of free tRNAs and 50S ribosomes. The sequence is that of Peptidyl-tRNA hydrolase from Anaplasma phagocytophilum (strain HZ).